The primary structure comprises 185 residues: Capsid protein (185 aa).

Residues N136–C185 are disordered. Over residues V149–S178 the composition is skewed to basic residues. Residues S157, S164, and S172 each carry the phosphoserine; by host modification. A 1; half-length repeat occupies S157–P163. Residues S157–Q179 are 3 X 8 AA repeats of S-P-R-R-R-[PR]-S-Q. Residues R160–R177 carry the Bipartite nuclear localization signal motif. 2 tandem repeats follow at residues S164–Q171 and S172–Q179. The interval Q179–C185 is RNA binding.

This sequence belongs to the orthohepadnavirus core antigen family. Homodimerizes, then multimerizes. Interacts with cytosol exposed regions of viral L glycoprotein present in the reticulum-to-Golgi compartment. Interacts with human FLNB. Phosphorylated form interacts with host importin alpha; this interaction depends on the exposure of the NLS, which itself depends upon genome maturation and/or phosphorylation of the capsid protein. Interacts with host NUP153. Phosphorylated by host SRPK1, SRPK2, and maybe protein kinase C or GAPDH. Phosphorylation is critical for pregenomic RNA packaging. Protein kinase C phosphorylation is stimulated by HBx protein and may play a role in transport of the viral genome to the nucleus at the late step during the viral replication cycle.

Its subcellular location is the virion. The protein localises to the host cytoplasm. Functionally, self assembles to form an icosahedral capsid. Most capsids appear to be large particles with an icosahedral symmetry of T=4 and consist of 240 copies of capsid protein, though a fraction forms smaller T=3 particles consisting of 180 capsid proteins. Entering capsids are transported along microtubules to the nucleus. Phosphorylation of the capsid is thought to induce exposure of nuclear localization signal in the C-terminal portion of the capsid protein that allows binding to the nuclear pore complex via the importin (karyopherin-) alpha and beta. Capsids are imported in intact form through the nuclear pore into the nuclear basket, where it probably binds NUP153. Only capsids that contain the mature viral genome can release the viral DNA and capsid protein into the nucleoplasm. Immature capsids get stuck in the basket. Capsids encapsulate the pre-genomic RNA and the P protein. Pre-genomic RNA is reverse-transcribed into DNA while the capsid is still in the cytoplasm. The capsid can then either be directed to the nucleus, providing more genomes for transcription, or bud through the endoplasmic reticulum to provide new virions. This is Capsid protein from Homo sapiens (Human).